The primary structure comprises 166 residues: Large ribosomal subunit protein uL10 (166 aa).

The protein belongs to the universal ribosomal protein uL10 family. In terms of assembly, part of the ribosomal stalk of the 50S ribosomal subunit. The N-terminus interacts with L11 and the large rRNA to form the base of the stalk. The C-terminus forms an elongated spine to which L12 dimers bind in a sequential fashion forming a multimeric L10(L12)X complex.

Forms part of the ribosomal stalk, playing a central role in the interaction of the ribosome with GTP-bound translation factors. This is Large ribosomal subunit protein uL10 from Limosilactobacillus reuteri (strain DSM 20016) (Lactobacillus reuteri).